Reading from the N-terminus, the 388-residue chain is Phosphopentomutase (388 aa).

Residues Asp-11, Asp-283, His-288, Asp-324, His-325, and His-336 each coordinate Mn(2+).

Belongs to the phosphopentomutase family. The cofactor is Mn(2+).

It localises to the cytoplasm. The enzyme catalyses 2-deoxy-alpha-D-ribose 1-phosphate = 2-deoxy-D-ribose 5-phosphate. It catalyses the reaction alpha-D-ribose 1-phosphate = D-ribose 5-phosphate. It functions in the pathway carbohydrate degradation; 2-deoxy-D-ribose 1-phosphate degradation; D-glyceraldehyde 3-phosphate and acetaldehyde from 2-deoxy-alpha-D-ribose 1-phosphate: step 1/2. Functionally, isomerase that catalyzes the conversion of deoxy-ribose 1-phosphate (dRib-1-P) and ribose 1-phosphate (Rib-1-P) to deoxy-ribose 5-phosphate (dRib-5-P) and ribose 5-phosphate (Rib-5-P), respectively. This is Phosphopentomutase from Enterococcus faecalis (strain ATCC 700802 / V583).